A 541-amino-acid chain; its full sequence is MAKEIKFAEEARRSLEAGVNKLADTVKVTLGPKGRNVIIDKKFGSPLITNDGVTIAREIELEDAYENMGAQLVKEVATKTNDVAGDGTTTATLLAQAIIREGLKNVAAGANPMILKKGIQKAVDVAVEELKNTSQKVEGKEAIAQIGAVSAADEEIGQLIADAMEKVGNDGVITVEESKSMGTTLDVVEGMQFDRGYLSAYMVTDTEKMEAVFNDPYILLTDKKINTVQEILPVLEQIVQQGRKLLIIAEDIEGEALATLVLNKLRGTFECVAVKAPGFGDRRKAMLDDIAVLTGATVISDELGYDLKTATIDMLGTARTVKVDKDNTTIVEGAGDSSAIKDRVNQIKRQIEETTSDFDKEKLQERLAKLSGGVAVIQVGAATETELKERKLRIEDALNATRAGVEEGMVAGGGASLVHVIPAVEALLETTEGDERTGVKIIRRALEEPLRQIAANAGLEGSVIVEKVMSSEKGIGFDALTEKYVNMIEAGIVDPTKVTRSALQNAASVSAMLLTTEGAIVDIKSDEPSMPGGMGGGMPMM.

Residues 29–32 (TLGP), 86–90 (DGTTT), G413, 478–480 (DAL), and D494 contribute to the ATP site.

This sequence belongs to the chaperonin (HSP60) family. As to quaternary structure, forms a cylinder of 14 subunits composed of two heptameric rings stacked back-to-back. Interacts with the co-chaperonin GroES.

It is found in the cytoplasm. It catalyses the reaction ATP + H2O + a folded polypeptide = ADP + phosphate + an unfolded polypeptide.. Functionally, together with its co-chaperonin GroES, plays an essential role in assisting protein folding. The GroEL-GroES system forms a nano-cage that allows encapsulation of the non-native substrate proteins and provides a physical environment optimized to promote and accelerate protein folding. This is Chaperonin GroEL from Alkaliphilus oremlandii (strain OhILAs) (Clostridium oremlandii (strain OhILAs)).